A 193-amino-acid polypeptide reads, in one-letter code: NADPH:quinone oxidoreductase MdaB (193 aa).

FAD-binding positions include 16-23, 69-72, tyrosine 108, and 124-127; these read SNGQLNDT, GWWM, and TWNA.

It belongs to the oxidoreductase MdaB family. Homodimer. Requires FAD as cofactor.

The protein localises to the cytoplasm. The catalysed reaction is a quinone + NADPH + H(+) = a quinol + NADP(+). Functionally, NADPH-specific quinone reductase. The protein is NADPH:quinone oxidoreductase MdaB of Escherichia coli O157:H7.